The sequence spans 254 residues: Type II restriction enzyme HpaI (254 aa).

The catalysed reaction is Endonucleolytic cleavage of DNA to give specific double-stranded fragments with terminal 5'-phosphates.. Functionally, a P subtype restriction enzyme that recognizes the double-stranded sequence 5'-GTTAAC-3' and cleaves after T-3. This is Type II restriction enzyme HpaI (hpaIR) from Haemophilus parainfluenzae.